The sequence spans 96 residues: Protein TraA (96 aa).

The protein is Protein TraA (traA) of Escherichia coli.